Consider the following 134-residue polypeptide: Translation initiation factor 2 subunit beta (134 aa).

The protein belongs to the eIF-2-beta/eIF-5 family. Heterotrimer composed of an alpha, a beta and a gamma chain.

Its function is as follows. eIF-2 functions in the early steps of protein synthesis by forming a ternary complex with GTP and initiator tRNA. The chain is Translation initiation factor 2 subunit beta from Pyrobaculum aerophilum (strain ATCC 51768 / DSM 7523 / JCM 9630 / CIP 104966 / NBRC 100827 / IM2).